The chain runs to 129 residues: M-zodatoxin-Lt8k (129 aa).

The first 20 residues, 1–20, serve as a signal peptide directing secretion; the sequence is MKYFVVALALVAAFACIAES. The propeptide occupies 21 to 60; it reads KPAESEHELAEVEEENELADLEDAVWLEHLADLSDLEEAR.

This sequence belongs to the cationic peptide 06 (cytoinsectotoxin) family. As to expression, expressed by the venom gland.

Its subcellular location is the secreted. Insecticidal, cytolytic and antimicrobial peptide. Forms voltage-dependent, ion-permeable channels in membranes. At high concentration causes cell membrane lysis. In Lachesana tarabaevi (Spider), this protein is M-zodatoxin-Lt8k (cit 1-10).